We begin with the raw amino-acid sequence, 344 residues long: tRNA N6-adenosine threonylcarbamoyltransferase (344 aa).

Fe cation contacts are provided by His-112 and His-116. Residues 135–139 (LVSGG), Asp-168, Gly-181, and Asn-271 contribute to the substrate site. Asp-299 lines the Fe cation pocket.

The protein belongs to the KAE1 / TsaD family. It depends on Fe(2+) as a cofactor.

It localises to the cytoplasm. It catalyses the reaction L-threonylcarbamoyladenylate + adenosine(37) in tRNA = N(6)-L-threonylcarbamoyladenosine(37) in tRNA + AMP + H(+). Required for the formation of a threonylcarbamoyl group on adenosine at position 37 (t(6)A37) in tRNAs that read codons beginning with adenine. Is involved in the transfer of the threonylcarbamoyl moiety of threonylcarbamoyl-AMP (TC-AMP) to the N6 group of A37, together with TsaE and TsaB. TsaD likely plays a direct catalytic role in this reaction. The protein is tRNA N6-adenosine threonylcarbamoyltransferase of Sphingopyxis alaskensis (strain DSM 13593 / LMG 18877 / RB2256) (Sphingomonas alaskensis).